A 278-amino-acid chain; its full sequence is Sulfur carrier protein FdhD (278 aa).

Cysteine 121 (cysteine persulfide intermediate) is an active-site residue. Residue 260–265 participates in Mo-bis(molybdopterin guanine dinucleotide) binding; sequence FCKPGR.

This sequence belongs to the FdhD family.

It localises to the cytoplasm. Required for formate dehydrogenase (FDH) activity. Acts as a sulfur carrier protein that transfers sulfur from IscS to the molybdenum cofactor prior to its insertion into FDH. In Escherichia coli O127:H6 (strain E2348/69 / EPEC), this protein is Sulfur carrier protein FdhD.